The chain runs to 709 residues: Elongation factor G (709 aa).

Residues 8 to 290 (NRYRNIGISA…AVIQYMPAPQ (283 aa)) enclose the tr-type G domain. GTP-binding positions include 17–24 (AHIDAGKT), 88–92 (DTPGH), and 142–145 (NKMD).

It belongs to the TRAFAC class translation factor GTPase superfamily. Classic translation factor GTPase family. EF-G/EF-2 subfamily.

Its subcellular location is the cytoplasm. Functionally, catalyzes the GTP-dependent ribosomal translocation step during translation elongation. During this step, the ribosome changes from the pre-translocational (PRE) to the post-translocational (POST) state as the newly formed A-site-bound peptidyl-tRNA and P-site-bound deacylated tRNA move to the P and E sites, respectively. Catalyzes the coordinated movement of the two tRNA molecules, the mRNA and conformational changes in the ribosome. In Psychrobacter sp. (strain PRwf-1), this protein is Elongation factor G.